A 331-amino-acid polypeptide reads, in one-letter code: UPF0194 membrane protein YbhG (331 aa).

The N-terminal stretch at 1–15 (MKKPVVIGLAVVVLA) is a signal peptide. Residues 107–208 (EEIAQAAAAV…LNLQDSTLIA (102 aa)) adopt a coiled-coil conformation.

It belongs to the UPF0194 family.

Its subcellular location is the periplasm. This is UPF0194 membrane protein YbhG from Escherichia coli O157:H7 (strain EC4115 / EHEC).